A 162-amino-acid polypeptide reads, in one-letter code: Cyclic pyranopterin monophosphate synthase (162 aa).

Substrate-binding positions include 79 to 81 (LCH) and 117 to 118 (ME). The active site involves Asp-132.

The protein belongs to the MoaC family. In terms of assembly, homohexamer; trimer of dimers.

The enzyme catalyses (8S)-3',8-cyclo-7,8-dihydroguanosine 5'-triphosphate = cyclic pyranopterin phosphate + diphosphate. It functions in the pathway cofactor biosynthesis; molybdopterin biosynthesis. In terms of biological role, catalyzes the conversion of (8S)-3',8-cyclo-7,8-dihydroguanosine 5'-triphosphate to cyclic pyranopterin monophosphate (cPMP). This Bordetella avium (strain 197N) protein is Cyclic pyranopterin monophosphate synthase.